Consider the following 210-residue polypeptide: UPF0301 protein Mnod_6933 (210 aa).

This sequence belongs to the UPF0301 (AlgH) family.

The chain is UPF0301 protein Mnod_6933 from Methylobacterium nodulans (strain LMG 21967 / CNCM I-2342 / ORS 2060).